Here is a 262-residue protein sequence, read N- to C-terminus: Global transcriptional regulator CodY (262 aa).

The GAF domain stretch occupies residues 1 to 159 (MATLLEKTRK…ATTVIGVQLS (159 aa)). Residues 207 to 226 (ASVIADKIGITRSVIVNALR) constitute a DNA-binding region (H-T-H motif).

This sequence belongs to the CodY family.

It is found in the cytoplasm. DNA-binding global transcriptional regulator which is involved in the adaptive response to starvation and acts by directly or indirectly controlling the expression of numerous genes in response to nutrient availability. During rapid exponential growth, CodY is highly active and represses genes whose products allow adaptation to nutrient depletion. The chain is Global transcriptional regulator CodY from Lactococcus lactis subsp. cremoris (strain SK11).